The following is a 331-amino-acid chain: Laforin (331 aa).

A CBM20 domain is found at 1–124 (MRFRFGVVVP…NNLVDGVYCL (124 aa)). Residue serine 25 is modified to Phosphoserine; by AMPK. Substrate-binding positions include tryptophan 32, lysine 87, 103–107 (GPHHD), aspartate 197, aspartate 235, and arginine 241. Residues 156-323 (HYSRILPNIW…EEDFFQKFGK (168 aa)) enclose the Tyrosine-protein phosphatase domain. Cysteine 266 serves as the catalytic Phosphocysteine intermediate. Positions 266–272 (CNAGVGR) match the Glucan phosphatase signature motif CXAGXGR motif. Substrate-binding positions include 267–272 (NAGVGR) and tyrosine 304.

This sequence belongs to the protein-tyrosine phosphatase family. In terms of assembly, homodimer. Interacts with itself. Interacts with PPP1R3B, PPP1R3C, PPP1R3D, HIRIP5, and EPM2AIP1. Binds glycogen and Lafora bodies. Interacts with NHLRC1/malin (via the NHL repeats). Forms a complex with NHLRC1/malin and HSP70. Interacts with PPP1R3D; in the presence of NHLC1/malin the interaction leads to ubiquitination and autophagic degradation of PPP1R3D. Interacts (via the phosphatase domain) with MAPT/Tau; the interaction dephosphorylates MAPT. Interacts with PRDM8. Polyubiquitinated by NHLRC1/malin. Post-translationally, phosphorylation on Ser-25 by AMPK affects the phosphatase activity of the enzyme and its ability to homodimerize and interact with NHLRC1, PPP1R3C or PRKAA2.

The protein localises to the cytoplasm. Its subcellular location is the endoplasmic reticulum membrane. The protein resides in the cell membrane. The enzyme catalyses O-phospho-L-tyrosyl-[protein] + H2O = L-tyrosyl-[protein] + phosphate. The catalysed reaction is O-phospho-L-seryl-[protein] + H2O = L-seryl-[protein] + phosphate. It carries out the reaction O-phospho-L-threonyl-[protein] + H2O = L-threonyl-[protein] + phosphate. Plays an important role in preventing glycogen hyperphosphorylation and the formation of insoluble aggregates, via its activity as glycogen phosphatase, and by promoting the ubiquitination of proteins involved in glycogen metabolism via its interaction with the E3 ubiquitin ligase NHLRC1/malin. Dephosphorylates phosphotyrosine and synthetic substrates, such as para-nitrophenylphosphate (pNPP), and has low activity with phosphoserine and phosphothreonine substrates (in vitro). Has also been shown to dephosphorylate MAPT. Shows strong phosphatase activity towards complex carbohydrates in vitro, avoiding glycogen hyperphosphorylation which is associated with reduced branching and formation of insoluble aggregates. Forms a complex with NHLRC1/malin and HSP70, which suppresses the cellular toxicity of misfolded proteins by promoting their degradation through the ubiquitin-proteasome system (UPS). Acts as a scaffold protein to facilitate PPP1R3C/PTG ubiquitination by NHLRC1/malin. Also promotes proteasome-independent protein degradation through the macroautophagy pathway. This chain is Laforin (EPM2A), found in Canis lupus familiaris (Dog).